Reading from the N-terminus, the 263-residue chain is MDTLTASREKLAEKSKISVKNLDFFYGKFHALKSINLEIPEKKVTAFIGPSGCGKSTLLRIFNRMYELYPEQRAEGDVTFDGENLLTSKKDVALIRSKVGMVFQKPTPFPMSIYDNIAFGVKLFESLNASDMDERVEWALRKAALWGEVKDKLNQSGSSLSGGQQQRLCIARGIAIKPEVLLLDEPCSALDPISTAKVEELIAELKNDYTVVIVTHNMQQAARCSDYTAYMYLGDLVEFGATEDLFFKPKRKETEDYITGRFG.

The 242-residue stretch at 17 to 258 (ISVKNLDFFY…PKRKETEDYI (242 aa)) folds into the ABC transporter domain. ATP is bound at residue 49–56 (GPSGCGKS).

The protein belongs to the ABC transporter superfamily. Phosphate importer (TC 3.A.1.7) family. In terms of assembly, the complex is composed of two ATP-binding proteins (PstB), two transmembrane proteins (PstC and PstA) and a solute-binding protein (PstS).

The protein localises to the cell inner membrane. It carries out the reaction phosphate(out) + ATP + H2O = ADP + 2 phosphate(in) + H(+). In terms of biological role, part of the ABC transporter complex PstSACB involved in phosphate import. Responsible for energy coupling to the transport system. In Polaromonas sp. (strain JS666 / ATCC BAA-500), this protein is Phosphate import ATP-binding protein PstB.